The primary structure comprises 375 residues: ATP-dependent kinase YFH7 (375 aa).

Residue Gly-66–Thr-74 participates in ATP binding.

It belongs to the YFH7 family.

Its function is as follows. ATP-dependent kinase that could be involved in endoplasmic reticulum membrane assembly. This Zygosaccharomyces rouxii (strain ATCC 2623 / CBS 732 / NBRC 1130 / NCYC 568 / NRRL Y-229) protein is ATP-dependent kinase YFH7 (YFH7).